The sequence spans 378 residues: Erythronate-4-phosphate dehydrogenase (378 aa).

The substrate site is built by Ser45 and Thr66. The NAD(+) site is built by Asp146 and Thr175. The active site involves Arg208. Asp232 serves as a coordination point for NAD(+). Glu237 is a catalytic residue. The Proton donor role is filled by His254. Gly257 is a binding site for NAD(+). A substrate-binding site is contributed by Tyr258.

Belongs to the D-isomer specific 2-hydroxyacid dehydrogenase family. PdxB subfamily. As to quaternary structure, homodimer.

Its subcellular location is the cytoplasm. The enzyme catalyses 4-phospho-D-erythronate + NAD(+) = (R)-3-hydroxy-2-oxo-4-phosphooxybutanoate + NADH + H(+). It functions in the pathway cofactor biosynthesis; pyridoxine 5'-phosphate biosynthesis; pyridoxine 5'-phosphate from D-erythrose 4-phosphate: step 2/5. Functionally, catalyzes the oxidation of erythronate-4-phosphate to 3-hydroxy-2-oxo-4-phosphonooxybutanoate. In Salmonella arizonae (strain ATCC BAA-731 / CDC346-86 / RSK2980), this protein is Erythronate-4-phosphate dehydrogenase.